A 1201-amino-acid chain; its full sequence is DNA-directed RNA polymerase subunit beta' (1201 aa).

Positions 60, 62, 75, and 78 each coordinate Zn(2+). Residues aspartate 449, aspartate 451, and aspartate 453 each contribute to the Mg(2+) site. Positions 818, 892, 899, and 902 each coordinate Zn(2+).

The protein belongs to the RNA polymerase beta' chain family. The RNAP catalytic core consists of 2 alpha, 1 beta, 1 beta' and 1 omega subunit. When a sigma factor is associated with the core the holoenzyme is formed, which can initiate transcription. The cofactor is Mg(2+). It depends on Zn(2+) as a cofactor.

The enzyme catalyses RNA(n) + a ribonucleoside 5'-triphosphate = RNA(n+1) + diphosphate. DNA-dependent RNA polymerase catalyzes the transcription of DNA into RNA using the four ribonucleoside triphosphates as substrates. The polypeptide is DNA-directed RNA polymerase subunit beta' (Listeria monocytogenes serovar 1/2a (strain ATCC BAA-679 / EGD-e)).